The sequence spans 112 residues: Large ribosomal subunit protein bL17 (112 aa).

Belongs to the bacterial ribosomal protein bL17 family. Part of the 50S ribosomal subunit. Contacts protein L32.

This chain is Large ribosomal subunit protein bL17, found in Caldanaerobacter subterraneus subsp. tengcongensis (strain DSM 15242 / JCM 11007 / NBRC 100824 / MB4) (Thermoanaerobacter tengcongensis).